The sequence spans 256 residues: Imidazole glycerol phosphate synthase subunit HisF (256 aa).

Catalysis depends on residues D12 and D131.

This sequence belongs to the HisA/HisF family. In terms of assembly, heterodimer of HisH and HisF.

The protein localises to the cytoplasm. The enzyme catalyses 5-[(5-phospho-1-deoxy-D-ribulos-1-ylimino)methylamino]-1-(5-phospho-beta-D-ribosyl)imidazole-4-carboxamide + L-glutamine = D-erythro-1-(imidazol-4-yl)glycerol 3-phosphate + 5-amino-1-(5-phospho-beta-D-ribosyl)imidazole-4-carboxamide + L-glutamate + H(+). It participates in amino-acid biosynthesis; L-histidine biosynthesis; L-histidine from 5-phospho-alpha-D-ribose 1-diphosphate: step 5/9. In terms of biological role, IGPS catalyzes the conversion of PRFAR and glutamine to IGP, AICAR and glutamate. The HisF subunit catalyzes the cyclization activity that produces IGP and AICAR from PRFAR using the ammonia provided by the HisH subunit. The protein is Imidazole glycerol phosphate synthase subunit HisF of Renibacterium salmoninarum (strain ATCC 33209 / DSM 20767 / JCM 11484 / NBRC 15589 / NCIMB 2235).